The chain runs to 375 residues: Chaperone protein DnaJ (375 aa).

Positions 5–70 (DYYEVLGVER…SKRAAFDQYG (66 aa)) constitute a J domain. The segment at 134–212 (GTTVSIRVPT…CHGEGRVEEY (79 aa)) adopts a CR-type zinc-finger fold. Zn(2+) contacts are provided by Cys147, Cys150, Cys164, Cys167, Cys186, Cys189, Cys200, and Cys203. CXXCXGXG motif repeat units follow at residues 147 to 154 (CQPCDGSG), 164 to 171 (CPTCGGIG), 186 to 193 (CPRCHGQG), and 200 to 207 (CTSCHGEG).

It belongs to the DnaJ family. Homodimer. It depends on Zn(2+) as a cofactor.

The protein resides in the cytoplasm. Functionally, participates actively in the response to hyperosmotic and heat shock by preventing the aggregation of stress-denatured proteins and by disaggregating proteins, also in an autonomous, DnaK-independent fashion. Unfolded proteins bind initially to DnaJ; upon interaction with the DnaJ-bound protein, DnaK hydrolyzes its bound ATP, resulting in the formation of a stable complex. GrpE releases ADP from DnaK; ATP binding to DnaK triggers the release of the substrate protein, thus completing the reaction cycle. Several rounds of ATP-dependent interactions between DnaJ, DnaK and GrpE are required for fully efficient folding. Also involved, together with DnaK and GrpE, in the DNA replication of plasmids through activation of initiation proteins. The protein is Chaperone protein DnaJ of Pseudomonas putida (strain ATCC 47054 / DSM 6125 / CFBP 8728 / NCIMB 11950 / KT2440).